A 238-amino-acid chain; its full sequence is Large ribosomal subunit protein uL2 (238 aa).

The interval 199–238 (PHGGGLHQSVSRSSTVARNTPPGRKVGHIAARRTGRRDRK) is disordered. Over residues 206–216 (QSVSRSSTVAR) the composition is skewed to polar residues. Residues 223–238 (KVGHIAARRTGRRDRK) are compositionally biased toward basic residues.

The protein belongs to the universal ribosomal protein uL2 family. Part of the 50S ribosomal subunit. Forms a bridge to the 30S subunit in the 70S ribosome.

One of the primary rRNA binding proteins. Required for association of the 30S and 50S subunits to form the 70S ribosome, for tRNA binding and peptide bond formation. It has been suggested to have peptidyltransferase activity; this is somewhat controversial. Makes several contacts with the 16S rRNA in the 70S ribosome. The sequence is that of Large ribosomal subunit protein uL2 from Metallosphaera sedula (strain ATCC 51363 / DSM 5348 / JCM 9185 / NBRC 15509 / TH2).